A 1076-amino-acid chain; its full sequence is Bifunctional glutamine synthetase adenylyltransferase/adenylyl-removing enzyme (1076 aa).

An adenylyl removase region spans residues Met-1–Met-521. Positions Val-524–Arg-1076 are adenylyl transferase. Over residues Ala-1041–Pro-1056 the composition is skewed to low complexity. Positions Ala-1041–Arg-1076 are disordered.

It belongs to the GlnE family. It depends on Mg(2+) as a cofactor.

The catalysed reaction is [glutamine synthetase]-O(4)-(5'-adenylyl)-L-tyrosine + phosphate = [glutamine synthetase]-L-tyrosine + ADP. It carries out the reaction [glutamine synthetase]-L-tyrosine + ATP = [glutamine synthetase]-O(4)-(5'-adenylyl)-L-tyrosine + diphosphate. Functionally, involved in the regulation of glutamine synthetase GlnA, a key enzyme in the process to assimilate ammonia. When cellular nitrogen levels are high, the C-terminal adenylyl transferase (AT) inactivates GlnA by covalent transfer of an adenylyl group from ATP to specific tyrosine residue of GlnA, thus reducing its activity. Conversely, when nitrogen levels are low, the N-terminal adenylyl removase (AR) activates GlnA by removing the adenylyl group by phosphorolysis, increasing its activity. The regulatory region of GlnE binds the signal transduction protein PII (GlnB) which indicates the nitrogen status of the cell. This Bifidobacterium longum subsp. infantis (strain ATCC 15697 / DSM 20088 / JCM 1222 / NCTC 11817 / S12) protein is Bifunctional glutamine synthetase adenylyltransferase/adenylyl-removing enzyme.